The chain runs to 701 residues: Polyribonucleotide nucleotidyltransferase (701 aa).

2 residues coordinate Mg(2+): Asp490 and Asp496. A KH domain is found at 557-616 (PKVETMTIKPEKIRDVIGPGGKKINEIIDETGVKLDIEQDGTIFIGAVDQDMINRAREII). The 69-residue stretch at 626–694 (GQVYNAKVRR…DKGRVNASHR (69 aa)) folds into the S1 motif domain.

The protein belongs to the polyribonucleotide nucleotidyltransferase family. Requires Mg(2+) as cofactor.

The protein resides in the cytoplasm. The catalysed reaction is RNA(n+1) + phosphate = RNA(n) + a ribonucleoside 5'-diphosphate. Its function is as follows. Involved in mRNA degradation. Catalyzes the phosphorolysis of single-stranded polyribonucleotides processively in the 3'- to 5'-direction. In Staphylococcus carnosus (strain TM300), this protein is Polyribonucleotide nucleotidyltransferase.